The chain runs to 476 residues: MFSHLLKPAARSAGLLGHVNRRYLATVHTNTAREIPKPSRKPTPISLENATFTIKNGPIFSGKSFGAKANISGEAVFTTSLVGYPESMTDPSYRGQILVFTQPLIGNYGVPSSARDEHGLLRYFESPNIQASGIVVQDYALKHSHWTAVESLAQWCAREGVPAISGVDTREVVTYLREQGSSLARITVGEEYDADEDEAYIDPEAINLVRRVSTKAPFHVSSSLGDMHVALIDCGVKENILRSLVSRGASVTCFPFDYPIHKVAHHFDGVFISNGPGDPTHCTSTVYNLRKLFETSQLPVMGICMGHQLIALAAGAKTIKLKYGNRAHNIPALDLTTGKCHITSQNHGYAVDPTTLTSEWKEYFTNLNDQSNEGLIHASRPIFSAQFHPEAKGGPMDSSYLFDKYIQNVQRYKDHQSSFSEKSNKPSPLLVDLLSKERVGVHPAQPDFEMHVPGRVEQVDVGGPVAPPYQPITAAA.

The N-terminal 24 residues, 1-24 (MFSHLLKPAARSAGLLGHVNRRYL), are a transit peptide targeting the mitochondrion. In terms of domain architecture, Glutamine amidotransferase type-1 spans 228-415 (HVALIDCGVK…IQNVQRYKDH (188 aa)). The active-site Nucleophile is Cys-304. Catalysis depends on residues His-388 and Glu-390.

This sequence belongs to the CarA family. Heterodimer composed of 2 chains; the small (or glutamine) chain promotes the hydrolysis of glutamine to ammonia, which is used by the large (or ammonia) chain to synthesize carbamoyl phosphate.

It is found in the mitochondrion matrix. It carries out the reaction hydrogencarbonate + L-glutamine + 2 ATP + H2O = carbamoyl phosphate + L-glutamate + 2 ADP + phosphate + 2 H(+). The catalysed reaction is L-glutamine + H2O = L-glutamate + NH4(+). It participates in amino-acid biosynthesis; L-arginine biosynthesis; carbamoyl phosphate from bicarbonate: step 1/1. Small subunit of the arginine-specific carbamoyl phosphate synthase (CPSase). CPSase catalyzes the formation of carbamoyl phosphate from the ammonia moiety of glutamine, carbonate, and phosphate donated by ATP, the first step of the arginine biosynthetic pathway. The small subunit (glutamine amidotransferase) binds and cleaves glutamine to supply the large subunit with the substrate ammonia. In Phaeosphaeria nodorum (strain SN15 / ATCC MYA-4574 / FGSC 10173) (Glume blotch fungus), this protein is Carbamoyl phosphate synthase arginine-specific small chain (CPA1).